A 1789-amino-acid polypeptide reads, in one-letter code: Protein sprint (1789 aa).

6 disordered regions span residues 53–120 (TTAN…AHPP), 140–190 (TTTA…DLAN), 218–237 (PLWN…HPTG), 261–317 (QRMH…QAGL), 329–378 (LNNN…DADD), and 401–460 (RRSR…PCDL). Low complexity predominate over residues 82-114 (SINNNKNNNISNKNNNNNNNNNNNINNNNNNNN). Residues 140–149 (TTTANQLQQQ) are compositionally biased toward polar residues. Acidic residues predominate over residues 176–185 (PSEEDGDTDA). The segment covering 223–233 (RNGNGSTTTHC) has biased composition (polar residues). Residues 295–317 (NNNNINNNHNGQQSQKSQQQAGL) are compositionally biased toward low complexity. Over residues 337 to 361 (QPGSMTPASNRTGLDSNQNQKQNLN) the composition is skewed to polar residues. The segment covering 409 to 418 (QSRTSLVSSS) has biased composition (low complexity). The segment covering 428 to 445 (TSSEDDEEEPVEAEDEGE) has biased composition (acidic residues). An SH2 domain is found at 473-566 (WFLPGIQRSG…ELPVQLMLPR (94 aa)). Disordered stretches follow at residues 632-689 (FFSD…SGGQ), 744-787 (TAPE…SANG), 852-918 (GECK…ILES), 969-1006 (DLLA…QSLL), 1040-1067 (AAED…QGSP), 1094-1123 (RSQM…MLQP), and 1138-1160 (PKPK…KRAR). Residues 639 to 649 (KPPPTGAPPLP) are compositionally biased toward pro residues. A compositionally biased stretch (low complexity) spans 671–686 (TPSDTTNSSLSSFTTS). The span at 857-868 (TLSSQGSSSNDS) shows a compositional bias: polar residues. Over residues 903 to 914 (AGKESQHYKESD) the composition is skewed to basic and acidic residues. Residues 974–984 (TPSTPTPTQQS) show a composition bias toward low complexity. Composition is skewed to polar residues over residues 994 to 1006 (TATP…QSLL) and 1048 to 1065 (TTPT…SKQG). Residues 1143–1154 (SQQQQQSQQQQQ) show a composition bias toward low complexity. The region spanning 1531-1673 (RSEDIQLLAQ…LKTFMASEGE (143 aa)) is the VPS9 domain. The region spanning 1689–1777 (CSSVLRVIIP…CMLAYKRIDA (89 aa)) is the Ras-associating domain.

It belongs to the RIN (Ras interaction/interference) family. As to expression, in late cellular blastoderm embryos, it is expressed in the posterior end. Then, as development proceeds, it is expressed in the developing midgut, amnioserosa and in a specific subset of CNS neurons. Isoform 1 is expressed earlier in developing midgut and amnioserosa, but is not expressed in the CNS.

Functionally, potential Ras effector protein. May function as a guanine nucleotide exchange (GEF), by exchanging bound GDP for free GTP. The polypeptide is Protein sprint (spri) (Drosophila melanogaster (Fruit fly)).